The following is a 421-amino-acid chain: D-inositol 3-phosphate glycosyltransferase (421 aa).

Histidine 13 contacts 1D-myo-inositol 3-phosphate. UDP-N-acetyl-alpha-D-glucosamine is bound by residues 19-20 (QP) and glycine 27. 1D-myo-inositol 3-phosphate is bound by residues 24–29 (DAGGMN), lysine 82, tyrosine 115, threonine 139, and arginine 159. UDP-N-acetyl-alpha-D-glucosamine-binding residues include arginine 233, lysine 238, and valine 294. The Mg(2+) site is built by phenylalanine 303, arginine 304, and alanine 306. Positions 316 and 324 each coordinate UDP-N-acetyl-alpha-D-glucosamine. Threonine 330 provides a ligand contact to Mg(2+).

It belongs to the glycosyltransferase group 1 family. MshA subfamily. Homodimer.

The catalysed reaction is 1D-myo-inositol 3-phosphate + UDP-N-acetyl-alpha-D-glucosamine = 1D-myo-inositol 2-acetamido-2-deoxy-alpha-D-glucopyranoside 3-phosphate + UDP + H(+). Catalyzes the transfer of a N-acetyl-glucosamine moiety to 1D-myo-inositol 3-phosphate to produce 1D-myo-inositol 2-acetamido-2-deoxy-glucopyranoside 3-phosphate in the mycothiol biosynthesis pathway. This chain is D-inositol 3-phosphate glycosyltransferase, found in Arthrobacter sp. (strain FB24).